Reading from the N-terminus, the 216-residue chain is Uracil phosphoribosyltransferase (216 aa).

5-phospho-alpha-D-ribose 1-diphosphate is bound by residues Arg85, Arg110, and 135–143 (DPMVATGYS). Residues Ile200 and 205–207 (GDA) contribute to the uracil site. A 5-phospho-alpha-D-ribose 1-diphosphate-binding site is contributed by Asp206.

The protein belongs to the UPRTase family. It depends on Mg(2+) as a cofactor.

It carries out the reaction UMP + diphosphate = 5-phospho-alpha-D-ribose 1-diphosphate + uracil. It participates in pyrimidine metabolism; UMP biosynthesis via salvage pathway; UMP from uracil: step 1/1. Allosterically activated by GTP. Functionally, catalyzes the conversion of uracil and 5-phospho-alpha-D-ribose 1-diphosphate (PRPP) to UMP and diphosphate. This is Uracil phosphoribosyltransferase from Paraburkholderia phymatum (strain DSM 17167 / CIP 108236 / LMG 21445 / STM815) (Burkholderia phymatum).